We begin with the raw amino-acid sequence, 813 residues long: Probable receptor-like protein kinase At5g39020 (813 aa).

Positions 1–21 are cleaved as a signal peptide; that stretch reads MNCNVLFLLSVLVSVTAGVTA. Topologically, residues 22–437 are extracellular; sequence AYHPTDVFLF…TPPIKGKPHV (416 aa). 10 N-linked (GlcNAc...) asparagine glycosylation sites follow: N46, N61, N165, N202, N213, N263, N286, N293, N384, and N401. A helical transmembrane segment spans residues 438 to 458; the sequence is LVIILIVVGSVIGLATFIVII. The Cytoplasmic segment spans residues 459–813; sequence MLLIRQMKRK…QTQTLDSTII (355 aa). The 276-residue stretch at 496-771 folds into the Protein kinase domain; sequence KSFSHTVGKG…KVVEMIEGSL (276 aa). ATP is bound by residues 502-510 and K524; that span reads VGKGGFGTV. The Proton acceptor role is filled by D619. The tract at residues 791-813 is disordered; the sequence is ESSSLSDGQEAEKQTQTLDSTII. The span at 804–813 shows a compositional bias: polar residues; sequence QTQTLDSTII.

Belongs to the protein kinase superfamily. Ser/Thr protein kinase family.

It localises to the membrane. In Arabidopsis thaliana (Mouse-ear cress), this protein is Probable receptor-like protein kinase At5g39020.